We begin with the raw amino-acid sequence, 353 residues long: Protein Wnt-11b-1 (353 aa).

The first 22 residues, 1–22 (MAQIHHCVTLLLILCCSGLCGA), serve as a signal peptide directing secretion. 3 N-linked (GlcNAc...) asparagine glycosylation sites follow: Asn31, Asn38, and Asn88. Intrachain disulfides connect Cys78/Cys89, Cys128/Cys136, Cys138/Cys155, Cys208/Cys222, and Cys210/Cys217. Ser214 carries O-palmitoleoyl serine; by PORCN lipidation. 2 positions are modified to sulfotyrosine: Tyr274 and Tyr281. 6 disulfides stabilise this stretch: Cys282–Cys313, Cys298–Cys308, Cys312–Cys352, Cys328–Cys343, Cys330–Cys340, and Cys335–Cys336. An N-linked (GlcNAc...) asparagine glycan is attached at Asn299.

This sequence belongs to the Wnt family. As to quaternary structure, homodimer. Secreted homodimers form a complex with wnt5a homodimers; tyrosine sulfation of both wnt11 and wnt5a by tpst1 is required for this interaction. Interacts with the transmembrane receptor fzd7/fz7. Interacts with lrp6 and ryk. Interacts with tdgf1/frl1. Interacts weakly with frzb1 and strongly with frzb2/crescent. Interaction with frzb2/crescent antagonizes wnt11 function in the neuroectoderm, but enhances it in mesodermal tissue. Post-translationally, glycosylation is required for protein secretion. Palmitoleoylation is required for efficient binding to frizzled receptors. Depalmitoleoylation leads to Wnt signaling pathway inhibition.

The protein resides in the secreted. It localises to the extracellular space. The protein localises to the extracellular matrix. Ligand for the frizzled7 transmembrane receptor. Primarily acts via non-canonical Wnt pathways mediated by either Ca(2+) and PKC, or by JNK and dvl2/dsh. Depending on the cellular context, can also signal via the canonical Wnt pathway mediated by beta-catenin and dvl2/dsh. May also inhibit canonical Wnt signaling. Maternally initiates dorsal/ventral axis formation by a canonical route, which signals via lrp6. In a complex with wnt5a, activates the canonical and non-canonical processes involved in axis formation. In the non-canonical pathway, acts through fzd7/fz7 to induce phosphorylation of dvl2/dsh. Signals through a non-canonical Wnt pathway to regulate convergent extension movements during gastrulation. Interactions with the secreted Wnt antagonist sfrp5 to coordinate foregut development, acting via a non-canonical wnt pathway whereby sfrp5 restricts wnt11b activity to prevent inappropriate foregut formation. Mediates cardiogenesis via non-canonical Wnt signaling involving JNK-activation and PKC. Acts redundantly with wnt11/wnt11r during pronephros induction. This chain is Protein Wnt-11b-1, found in Xenopus tropicalis (Western clawed frog).